An 883-amino-acid chain; its full sequence is MADKKTVTPEEKKLVAEKHVDELVQKALVALEEMRKLNQEQVDYIVAKASVAALDAHGELALHAFEETGRGVFEDKATKNLFACEHVVNNMRHTKTVGVIEEDDVTGLTLIAEPVGVVCGITPTTNPTSTAIFKSLISLKTRNPIVFAFHPSAQESSAHAARIVRDAAIAAGAPENCVQWITQPSMEATSALMNHEGVATILATGGNAMVKAAYSCGKPALGVGAGNVPAYVEKSANIRQAAHDIVMSKSFDNGMVCASEQAVIIDKEIYDEFVAEFKSYHTYFVNKKEKALLEEFCFGVKANSKNCAGAKLNADIVGKPATWIAEQAGFTVPEGTNILAAECKEVGENEPLTREKLSPVIAVLKSESREDGITKARQMVEFNGLGHSAAIHTADEELTKEFGKAVKAIRVICNSPSTFGGIGDVYNAFLPSLTLGCGSYGRNSVGDNVSAINLLNIKKVGRRRNNMQWMKLPSKTYFERDSIQYLQKCRDVERVMIVTDHAMVELGFLDRIIEQLDLRRNKVVYQIFADVEPDPDITTVNRGTEIMRAFKPDTIIALGGGSPMDAAKVMWLFYEQPEVDFRDLVQKFMDIRKRAFKFPLLGKKTKFIAIPTTSGTGSEVTPFAVISDKANNRKYPIADYSLTPTVAIVDPALVLTVPGFVAADTGMDVLTHATEAYVSQMASDYTDGLALQAIKLVFENLESSVKNADFHSREKMHNASTIAGMAFANAFLGISHSMAHKIGAQFHTIHGRTNAILLPYVIRYNGTRPAKTATWPKYNYYRADEKYQDIARMLGLPASTPEEGVESYAKAVYELGERIGIQMNFRDQGIDEKEWKEHSRELAFLAYEDQCSPANPRLPMVDHMQEIIEDAYYGYKERPGRRK.

Residues 13-456 (KLVAEKHVDE…DNVSAINLLN (444 aa)) are aldehyde dehydrogenase. NAD(+) is bound by residues 121–126 (ITPTTN), Gly206, and Gly224. The active-site Nucleophile is Cys257. NAD(+)-binding positions include Glu355, Leu435, and 438–443 (GSYGRN). Residues 457-464 (IKKVGRRR) form a linker region. Residues Asp500, Asp534, 561 to 565 (GSPMD), 612 to 613 (TT), Val625, Lys634, and Leu653 contribute to the NAD(+) site. Asp668, His672, His736, and His750 together coordinate Fe cation.

It in the N-terminal section; belongs to the aldehyde dehydrogenase family. In the C-terminal section; belongs to the iron-containing alcohol dehydrogenase family. Fe(2+) is required as a cofactor.

It catalyses the reaction an aldehyde + NAD(+) + H2O = a carboxylate + NADH + 2 H(+). The enzyme catalyses ethanol + NAD(+) = acetaldehyde + NADH + H(+). Functionally, has alcohol dehydrogenase activity. Has aldehyde dehydrogenase activity. Plays a role in enhancing virulence in mice, under ethanol stress conditions, perhaps by inducing expression of pneumolysin (Ply) and increasing production of hydrogen peroxide H(2)O(2). May be considered a potential virulence factor. The polypeptide is Aldehyde-alcohol dehydrogenase (Streptococcus pneumoniae serotype 2 (strain D39 / NCTC 7466)).